Consider the following 224-residue polypeptide: Ribose-5-phosphate isomerase A (224 aa).

Substrate-binding positions include Thr26–Thr29, Asp82–Asp85, and Lys95–Gly98. Glu104 functions as the Proton acceptor in the catalytic mechanism. Residue Lys122 participates in substrate binding.

The protein belongs to the ribose 5-phosphate isomerase family. Homodimer.

It catalyses the reaction aldehydo-D-ribose 5-phosphate = D-ribulose 5-phosphate. It participates in carbohydrate degradation; pentose phosphate pathway; D-ribose 5-phosphate from D-ribulose 5-phosphate (non-oxidative stage): step 1/1. In terms of biological role, catalyzes the reversible conversion of ribose-5-phosphate to ribulose 5-phosphate. This chain is Ribose-5-phosphate isomerase A, found in Lactococcus lactis subsp. cremoris (strain SK11).